Reading from the N-terminus, the 129-residue chain is Glycine cleavage system H protein (129 aa).

A Lipoyl-binding domain is found at serine 24 to methionine 106. Lysine 65 bears the N6-lipoyllysine mark.

This sequence belongs to the GcvH family. In terms of assembly, the glycine cleavage system is composed of four proteins: P, T, L and H. (R)-lipoate serves as cofactor.

In terms of biological role, the glycine cleavage system catalyzes the degradation of glycine. The H protein shuttles the methylamine group of glycine from the P protein to the T protein. This is Glycine cleavage system H protein from Shewanella loihica (strain ATCC BAA-1088 / PV-4).